Consider the following 589-residue polypeptide: Aspartate--tRNA ligase (589 aa).

E171 is a binding site for L-aspartate. The aspartate stretch occupies residues 195–198; it reads QLFK. L-aspartate is bound at residue R217. ATP is bound by residues 217–219 and Q226; that span reads RDE. An L-aspartate-binding site is contributed by H448. E482 is a binding site for ATP. Residue R489 coordinates L-aspartate. Position 534–537 (534–537) interacts with ATP; that stretch reads GLDR.

Belongs to the class-II aminoacyl-tRNA synthetase family. Type 1 subfamily. Homodimer.

It is found in the cytoplasm. The catalysed reaction is tRNA(Asp) + L-aspartate + ATP = L-aspartyl-tRNA(Asp) + AMP + diphosphate. Functionally, catalyzes the attachment of L-aspartate to tRNA(Asp) in a two-step reaction: L-aspartate is first activated by ATP to form Asp-AMP and then transferred to the acceptor end of tRNA(Asp). The polypeptide is Aspartate--tRNA ligase (Idiomarina loihiensis (strain ATCC BAA-735 / DSM 15497 / L2-TR)).